The chain runs to 114 residues: Large ribosomal subunit protein uL22 (114 aa).

This sequence belongs to the universal ribosomal protein uL22 family. Part of the 50S ribosomal subunit.

In terms of biological role, this protein binds specifically to 23S rRNA; its binding is stimulated by other ribosomal proteins, e.g. L4, L17, and L20. It is important during the early stages of 50S assembly. It makes multiple contacts with different domains of the 23S rRNA in the assembled 50S subunit and ribosome. Functionally, the globular domain of the protein is located near the polypeptide exit tunnel on the outside of the subunit, while an extended beta-hairpin is found that lines the wall of the exit tunnel in the center of the 70S ribosome. The polypeptide is Large ribosomal subunit protein uL22 (Streptococcus suis (strain 98HAH33)).